Reading from the N-terminus, the 381-residue chain is 6-oxocyclohex-1-ene-1-carbonyl-CoA hydrolase (381 aa).

The protein belongs to the enoyl-CoA hydratase/isomerase family. Homohexamer.

It catalyses the reaction 6-oxocyclohex-1-ene-1-carbonyl-CoA + 2 H2O = 3-hydroxy-6-carboxyhexanoyl-CoA + H(+). It participates in aromatic compound metabolism; benzoyl-CoA degradation. In terms of biological role, involved in the central benzoyl-CoA catabolism. Catalyzes the addition of one molecule of water to the double bond and the hydrolytic cleavage of C-C bond in the alicyclic ring, 6-oxocyclohex-1-ene-1-carbonyl-CoA (6-OCH-CoA) to yield 3-hydroxypimelyl-CoA. The protein is 6-oxocyclohex-1-ene-1-carbonyl-CoA hydrolase of Geobacter metallireducens (strain ATCC 53774 / DSM 7210 / GS-15).